The following is a 699-amino-acid chain: Triacylglycerol hydrolase DDHD2 (699 aa).

Positions 1 to 11 (MSSGESHQEQL) are enriched in polar residues. Positions 1 to 25 (MSSGESHQEQLSQSDPSPSPNSCSS) are disordered. Residues 12 to 25 (SQSDPSPSPNSCSS) show a composition bias toward low complexity. The WWE domain occupies 30-112 (DMDASSSYEP…WDELPSEVRR (83 aa)). The Nucleophile role is filled by S351. Residues 383–445 (DRGDASTLEE…KILNHFSARK (63 aa)) enclose the SAM domain. A Phosphoserine modification is found at S447. The DDHD domain occupies 484–688 (LNYKPEIFFA…VLLVLKEIYQ (205 aa)). The interval 599–635 (QASETAEETEAEPESSSEKSNEANTEEPPVEVKEEAP) is disordered. Positions 603-613 (TAEETEAEPES) are enriched in acidic residues.

Belongs to the PA-PLA1 family. As to quaternary structure, forms homooligomers and, to a much smaller extent, heterooligomers with DDHD1.

The protein resides in the cytoplasm. It is found in the cytosol. Its subcellular location is the endoplasmic reticulum-Golgi intermediate compartment. It localises to the golgi apparatus. The protein localises to the cis-Golgi network. The enzyme catalyses a triacylglycerol + H2O = a diacylglycerol + a fatty acid + H(+). It carries out the reaction a diacylglycerol + H2O = a monoacylglycerol + a fatty acid + H(+). It catalyses the reaction a 1,3-diacylglycerol + H2O = a 1-acylglycerol + a fatty acid + H(+). The catalysed reaction is a 1-acylglycerol + H2O = glycerol + a fatty acid + H(+). The enzyme catalyses 1,2,3-tri-(9Z-octadecenoyl)-glycerol + H2O = di-(9Z)-octadecenoylglycerol + (9Z)-octadecenoate + H(+). It carries out the reaction di-(9Z)-octadecenoylglycerol + H2O = (9Z-octadecenoyl)-glycerol + (9Z)-octadecenoate + H(+). It catalyses the reaction 1,3-di-(9Z-octadecenoyl)-glycerol + H2O = 1-(9Z-octadecenoyl)-glycerol + (9Z)-octadecenoate + H(+). The catalysed reaction is trihexadecanoylglycerol + H2O = dihexadecanoylglycerol + hexadecanoate + H(+). The enzyme catalyses 1,2-di-(9Z-octadecenoyl)-sn-glycero-3-phosphocholine + H2O = (9Z-octadecenoyl)-sn-glycero-3-phosphocholine + (9Z)-octadecenoate + H(+). It carries out the reaction 1-(9Z-octadecenoyl)-glycerol + H2O = glycerol + (9Z)-octadecenoate + H(+). It catalyses the reaction 1,2-di-(9Z-octadecenoyl)-sn-glycero-3-phosphate + H2O = 2-(9Z-octadecenoyl)-sn-glycero-3-phosphate + (9Z)-octadecenoate + H(+). The catalysed reaction is 1-hexadecanoyl-2-(9Z-octadecenoyl)-sn-glycero-3-phosphate + H2O = 2-(9Z-octadecenoyl)-sn-glycero-3-phosphate + hexadecanoate + H(+). The enzyme catalyses 1-hexadecanoyl-2-(9Z-octadecenoyl)-sn-glycero-3-phosphoethanolamine + H2O = 2-(9Z-octadecenoyl)-sn-glycero-3-phosphoethanolamine + hexadecanoate + H(+). It carries out the reaction 1-hexadecanoyl-2-(9Z-octadecenoyl)-sn-glycero-3-phospho-L-serine + H2O = 2-(9Z-octadecenoyl)-sn-glycero-3-phospho-L-serine + hexadecanoate + H(+). It catalyses the reaction 1-hexadecanoyl-2-(9Z-octadecenoyl)-sn-glycero-3-phosphocholine + H2O = 2-(9Z-octadecenoyl)-sn-glycero-3-phosphocholine + hexadecanoate + H(+). Functionally, diacylglycerol (DAG) and triacylglycerol (TAG) lipase that is required for proper lipid homeostasis in the central nervous system. It cooperates with PNPLA2/ATGL in neuronal TAG catabolism and hydrolyzes sn-1,3-DAG downstream of PNPLA2/ATGL. In vitro, also acts as a phospholipase that hydrolyzes preferentially phosphatidic acids, including 1,2-dioleoyl-sn-phosphatidic acid, phosphatidylcholine and phosphatidylethanolamine. Specifically binds to phosphatidylinositol 3-phosphate (PI(3)P), phosphatidylinositol 4-phosphate (PI(4)P), phosphatidylinositol 5-phosphate (PI(5)P) and possibly phosphatidylinositol 4,5-bisphosphate (PI(4,5)P2). May be involved in the maintenance of the endoplasmic reticulum and/or Golgi structures. May regulate the transport between Golgi apparatus and plasma membrane. The polypeptide is Triacylglycerol hydrolase DDHD2 (Mus musculus (Mouse)).